The sequence spans 359 residues: Pyruvate dehydrogenase E1 component subunit beta, mitochondrial (359 aa).

The N-terminal 30 residues, 1-30 (MAAVAGLVRGPLRQASGLLKRRFHRSAPAA), are a transit peptide targeting the mitochondrion. A Phosphotyrosine modification is found at Tyr-67. A thiamine diphosphate-binding site is contributed by Glu-89. Positions 142, 190, 191, 193, and 195 each coordinate K(+). Lys-354 carries the post-translational modification N6-acetyllysine.

In terms of assembly, heterotetramer of two PDHA1 and two PDHB subunits. The heterotetramer interacts with DLAT, and is part of the multimeric pyruvate dehydrogenase complex that contains multiple copies of pyruvate dehydrogenase (E1), dihydrolipoamide acetyltransferase (DLAT, E2) and lipoamide dehydrogenase (DLD, E3). These subunits are bound to an inner core composed of about 48 DLAT and 12 PDHX molecules. Interacts with DLAT. The cofactor is thiamine diphosphate.

Its subcellular location is the mitochondrion matrix. It catalyses the reaction N(6)-[(R)-lipoyl]-L-lysyl-[protein] + pyruvate + H(+) = N(6)-[(R)-S(8)-acetyldihydrolipoyl]-L-lysyl-[protein] + CO2. The pyruvate dehydrogenase complex catalyzes the overall conversion of pyruvate to acetyl-CoA and CO(2), and thereby links the glycolytic pathway to the tricarboxylic cycle. The chain is Pyruvate dehydrogenase E1 component subunit beta, mitochondrial (Pdhb) from Rattus norvegicus (Rat).